The primary structure comprises 359 residues: Probable E3 ubiquitin-protein ligase LUL4 (359 aa).

The segment at 1 to 35 is disordered; the sequence is MGISFSNNNRRRDNNNRRHLHHYPPPPPYYYLDPP. G2 is lipidated: N-myristoyl glycine. A compositionally biased stretch (pro residues) spans 23-35; that stretch reads YPPPPPYYYLDPP. A DAR2 domain region spans residues 148 to 267; that stretch reads FVFDALFDGS…GSFKVKVVKQ (120 aa). The RING-type zinc finger occupies 302–341; sequence CVICMTEAKDTAVLPCRHLCMCSDCAKELRLQSNKCPICR.

Belongs to the RING-type zinc finger family. LOG2 subfamily.

The catalysed reaction is S-ubiquitinyl-[E2 ubiquitin-conjugating enzyme]-L-cysteine + [acceptor protein]-L-lysine = [E2 ubiquitin-conjugating enzyme]-L-cysteine + N(6)-ubiquitinyl-[acceptor protein]-L-lysine.. It participates in protein modification; protein ubiquitination. Its function is as follows. Acts as an E3 ubiquitin-protein ligase, or as part of E3 complex, which accepts ubiquitin from specific E2 ubiquitin-conjugating enzymes and then transfers it to substrates (in vitro). The protein is Probable E3 ubiquitin-protein ligase LUL4 (LUL4) of Arabidopsis thaliana (Mouse-ear cress).